We begin with the raw amino-acid sequence, 349 residues long: Two pore potassium channel b (349 aa).

Positions 1 to 53 (MAALDQQPLLHDGGDQKPPPEGAARRFRRCRTAPSSEPPPTDKDNSSAADAPP) are disordered. The Cytoplasmic segment spans residues 1 to 66 (MAALDQQPLL…FTGGGRPSFR (66 aa)). The chain crosses the membrane as a helical span at residues 67-87 (LVGLLLVAYLLLGTIAFYLAM). The segment at residues 100 to 119 (DALYFCVVTMTTVGYGDLVP) is an intramembrane region (pore-forming). A helical membrane pass occupies residues 123–143 (AAKLLACAFVFAGVAVVGTFL). Over 144 to 180 (SKAADYLVEKQEALLFRALHSHTMVRAMEMNKVRYKL) the chain is Cytoplasmic. The chain crosses the membrane as a helical span at residues 181-201 (YTAGLLLVAAVASGTVVLWKV). The pore-forming intramembrane region spans 208-227 (DAFYCVCATVTTLGYGDRSF). A helical transmembrane segment spans residues 234–254 (AFAVAWITVSTVVVALFFLYA). The Cytoplasmic portion of the chain corresponds to 255-349 (AELYTERRQR…PTPDPPPSLR (95 aa)). 2 EF-hand domains span residues 271-306 (LRRR…ELGK) and 310-345 (EDIS…PDPP). Residues Asp-284, Asp-286, Asp-288, Arg-290, Asp-295, Asp-323, Asp-325, Ser-327, Thr-329, and Asp-334 each coordinate Ca(2+). Positions 326–349 (HSGTLSPADLAAAQPTPDPPPSLR) are disordered.

The protein belongs to the two pore domain potassium channel (TC 1.A.1.7) family. As to quaternary structure, homodimer.

Its subcellular location is the vacuole membrane. Functionally, highly selective inward-rectifying potassium channel that is specifically located in the tonoplast of protein storage vacuoles. Functions independently of the voltage difference across the membrane. This Oryza sativa subsp. japonica (Rice) protein is Two pore potassium channel b (TPKB).